Reading from the N-terminus, the 216-residue chain is DNA-directed RNA polymerase subunit alpha (216 aa).

It belongs to the RNA polymerase alpha chain family. As to quaternary structure, in plastids the minimal PEP RNA polymerase catalytic core is composed of four subunits: alpha, beta, beta', and beta''. When a (nuclear-encoded) sigma factor is associated with the core the holoenzyme is formed, which can initiate transcription.

It is found in the plastid. The protein resides in the chloroplast. The enzyme catalyses RNA(n) + a ribonucleoside 5'-triphosphate = RNA(n+1) + diphosphate. In terms of biological role, DNA-dependent RNA polymerase catalyzes the transcription of DNA into RNA using the four ribonucleoside triphosphates as substrates. In Euglena granulata, this protein is DNA-directed RNA polymerase subunit alpha (rpoA).